We begin with the raw amino-acid sequence, 67 residues long: Large ribosomal subunit protein bL35 (67 aa).

Belongs to the bacterial ribosomal protein bL35 family.

The chain is Large ribosomal subunit protein bL35 from Sphingopyxis alaskensis (strain DSM 13593 / LMG 18877 / RB2256) (Sphingomonas alaskensis).